A 372-amino-acid polypeptide reads, in one-letter code: Alanine dehydrogenase (372 aa).

2 residues coordinate substrate: Arg15 and Lys75. His96 acts as the Proton donor/acceptor in catalysis. NAD(+) is bound by residues Ser134, 178–179 (IA), Asp198, Ser220, 239–240 (VL), 267–270 (IAID), Arg280, and 299–302 (VANM). Asp270 functions as the Proton donor/acceptor in the catalytic mechanism.

This sequence belongs to the AlaDH/PNT family. In terms of assembly, homohexamer.

Its subcellular location is the cytoplasm. The enzyme catalyses L-alanine + NAD(+) + H2O = pyruvate + NH4(+) + NADH + H(+). It participates in amino-acid degradation; L-alanine degradation via dehydrogenase pathway; NH(3) and pyruvate from L-alanine: step 1/1. With respect to regulation, inhibited by p-chloromercuribenzoate and HgCl(2) and by Cu(2+) and Pb(2+) salts, unaffected by amino acids such as D-alanine and beta-alanine or by nucleotides or nucleosides. In terms of biological role, catalyzes the reversible reductive amination of pyruvate to L-alanine. Prefers L-alanine for oxidative deamination, other substrates are poorly reactive. In the other direction 2-oxobutyrate is almost as reactive as pyruvate. Ammonia is the sole amino donor for the reductive amination of pyruvate, NADPH is inert. Reductive amination proceeds through a sequential, ordered ternary-binary mechanism, where NADH binds first followed by ammonia and pyruvate; the products are released in the order L-alanine and NAD(+). A key factor in the assimilation of L-alanine as an energy source via the tricarboxylic acid cycle during sporulation. This chain is Alanine dehydrogenase (ald), found in Lysinibacillus sphaericus (Bacillus sphaericus).